We begin with the raw amino-acid sequence, 699 residues long: 4-alpha-glucanotransferase (699 aa).

This sequence belongs to the disproportionating enzyme family.

Its subcellular location is the cytoplasm. The enzyme catalyses Transfers a segment of a (1-&gt;4)-alpha-D-glucan to a new position in an acceptor, which may be glucose or a (1-&gt;4)-alpha-D-glucan.. This chain is 4-alpha-glucanotransferase (malQ), found in Haemophilus influenzae (strain ATCC 51907 / DSM 11121 / KW20 / Rd).